The chain runs to 61 residues: Small ribosomal subunit protein uS14 (61 aa).

Zn(2+) is bound by residues C24, C27, C40, and C43.

It belongs to the universal ribosomal protein uS14 family. Zinc-binding uS14 subfamily. Part of the 30S ribosomal subunit. Contacts proteins S3 and S10. Requires Zn(2+) as cofactor.

Binds 16S rRNA, required for the assembly of 30S particles and may also be responsible for determining the conformation of the 16S rRNA at the A site. This Halalkalibacterium halodurans (strain ATCC BAA-125 / DSM 18197 / FERM 7344 / JCM 9153 / C-125) (Bacillus halodurans) protein is Small ribosomal subunit protein uS14.